A 254-amino-acid chain; its full sequence is Syntaxin-6 (254 aa).

At 1 to 233 the chain is on the cytoplasmic side; sequence MSMEDPFFVV…VSHMTSDRRQ (233 aa). Positions 46–72 form a coiled coil; it reads TTNELRNNLRSIEWDLEDLDETISIVE. Residues 103–138 are disordered; the sequence is KDQMSNSSMQALAERKNRQALLGESSSQSWSSGPDK. The t-SNARE coiled-coil homology domain occupies 162 to 224; the sequence is QLIVEQQDEQ…DNVMKKLAKV (63 aa). The chain crosses the membrane as a helical; Anchor for type IV membrane protein span at residues 234–254; the sequence is WCAIIVLFVILLVVLVLFLVL.

The protein belongs to the syntaxin family.

It is found in the golgi apparatus membrane. The protein resides in the golgi apparatus. The protein localises to the trans-Golgi network membrane. It localises to the recycling endosome membrane. In terms of biological role, SNARE promoting movement of transport vesicles to target membranes. Targets endosomes to the trans-Golgi network, and may therefore function in retrograde trafficking. Together with SNARE STX12, promotes movement of vesicles from endosomes to the cell membrane, and may therefore function in the endocytic recycling pathway. The polypeptide is Syntaxin-6 (STX6) (Gallus gallus (Chicken)).